We begin with the raw amino-acid sequence, 319 residues long: Beta-ketoacyl-[acyl-carrier-protein] synthase III (319 aa).

Catalysis depends on residues cysteine 113 and histidine 246. The ACP-binding stretch occupies residues 247-251 (QANIR). Asparagine 276 is a catalytic residue.

Belongs to the thiolase-like superfamily. FabH family. In terms of assembly, homodimer.

It localises to the cytoplasm. It catalyses the reaction malonyl-[ACP] + acetyl-CoA + H(+) = 3-oxobutanoyl-[ACP] + CO2 + CoA. Its pathway is lipid metabolism; fatty acid biosynthesis. Its function is as follows. Catalyzes the condensation reaction of fatty acid synthesis by the addition to an acyl acceptor of two carbons from malonyl-ACP. Catalyzes the first condensation reaction which initiates fatty acid synthesis and may therefore play a role in governing the total rate of fatty acid production. Possesses both acetoacetyl-ACP synthase and acetyl transacylase activities. Its substrate specificity determines the biosynthesis of branched-chain and/or straight-chain of fatty acids. This is Beta-ketoacyl-[acyl-carrier-protein] synthase III from Ehrlichia ruminantium (strain Gardel).